The primary structure comprises 194 residues: Imidazoleglycerol-phosphate dehydratase (194 aa).

The protein belongs to the imidazoleglycerol-phosphate dehydratase family.

It is found in the cytoplasm. The enzyme catalyses D-erythro-1-(imidazol-4-yl)glycerol 3-phosphate = 3-(imidazol-4-yl)-2-oxopropyl phosphate + H2O. Its pathway is amino-acid biosynthesis; L-histidine biosynthesis; L-histidine from 5-phospho-alpha-D-ribose 1-diphosphate: step 6/9. The sequence is that of Imidazoleglycerol-phosphate dehydratase from Streptococcus gordonii (strain Challis / ATCC 35105 / BCRC 15272 / CH1 / DL1 / V288).